The primary structure comprises 232 residues: Zinc finger protein RTS2 (232 aa).

Residues 24–48 (YYCQICQRQCKDANGFQSHNKSPSH) form a C2H2-type zinc finger. Disordered stretches follow at residues 180–199 (AKRQTEKVYQPEMKSEISGD) and 211–232 (GNGRVNKKKKKVPPRKDGIKFR).

Its subcellular location is the nucleus. The sequence is that of Zinc finger protein RTS2 (RTS2) from Saccharomyces cerevisiae (strain ATCC 204508 / S288c) (Baker's yeast).